Here is a 776-residue protein sequence, read N- to C-terminus: Protein SEY1 (776 aa).

The Cytoplasmic portion of the chain corresponds to 1-681 (MADRSAIQLI…KRSIITTRTH (681 aa)). The 230-residue stretch at 34 to 263 (GLDYHVISVF…TENYYFKPQY (230 aa)) folds into the GB1/RHD3-type G domain. Residue 44–51 (GSQSSGKS) coordinates GTP. The chain crosses the membrane as a helical span at residues 682 to 702 (IPPWIYVLLAVLGWNEFVAVI). Residues 703–705 (RNP) are Lumenal-facing. The helical transmembrane segment at 706–726 (LFVTLTLILGATFFVIHKFGL) threads the bilayer. Topologically, residues 727 to 776 (WGPVVNVVQSAVGETRTAIKDKLRQFVVEDHEVKESFEMKDFSKNEQKEK) are cytoplasmic.

It belongs to the TRAFAC class dynamin-like GTPase superfamily. GB1/RHD3 GTPase family. RHD3 subfamily. In terms of assembly, interacts with RTN1 and YOP1; GTP binding is not required for these interactions.

It is found in the endoplasmic reticulum membrane. Functionally, cooperates with the reticulon proteins RTN1 and RTN2 and the tubule-shaping DP1 family protein YOP1 to generate and maintain the structure of the tubular endoplasmic reticulum network. Has GTPase activity, which is required for its function in ER organization. The polypeptide is Protein SEY1 (Saccharomyces cerevisiae (strain RM11-1a) (Baker's yeast)).